Here is a 153-residue protein sequence, read N- to C-terminus: Membrane protein FAM174B (153 aa).

A signal peptide spans 1–27 (MSALPPQPPPPLLLLLLALLAAPAALA). Residues 28–84 (RRAESASASQPEAEHQPPPGPGNATQLGSGMAGGGSSNSSVDAVVTRISSLLRDLPT) are Extracellular-facing. Positions 31 to 67 (ESASASQPEAEHQPPPGPGNATQLGSGMAGGGSSNSS) are disordered. Asparagine 50 carries an N-linked (GlcNAc...) asparagine glycan. A helical transmembrane segment spans residues 85-105 (LKATVIVACAFSALLIACLLL). At 106-153 (RVFRLGKRLKKTRKYDIITTPAERVEMAPLNEEDDEDEDSTVFDIKYR) the chain is on the cytoplasmic side.

Belongs to the FAM174 family.

It localises to the cell membrane. The protein localises to the golgi apparatus. In terms of biological role, essential for Golgi structural integrity. This is Membrane protein FAM174B (Fam174b) from Mus musculus (Mouse).